Here is a 357-residue protein sequence, read N- to C-terminus: Phosphoribosylformylglycinamidine cyclo-ligase (357 aa).

This sequence belongs to the AIR synthase family.

It is found in the cytoplasm. It catalyses the reaction 2-formamido-N(1)-(5-O-phospho-beta-D-ribosyl)acetamidine + ATP = 5-amino-1-(5-phospho-beta-D-ribosyl)imidazole + ADP + phosphate + H(+). It functions in the pathway purine metabolism; IMP biosynthesis via de novo pathway; 5-amino-1-(5-phospho-D-ribosyl)imidazole from N(2)-formyl-N(1)-(5-phospho-D-ribosyl)glycinamide: step 2/2. In Rhodopseudomonas palustris (strain ATCC BAA-98 / CGA009), this protein is Phosphoribosylformylglycinamidine cyclo-ligase.